Consider the following 52-residue polypeptide: Metallothionein-2 (52 aa).

2 consecutive repeats follow at residues 43 to 47 (QTCKC) and 48 to 52 (QTCKC).

This sequence belongs to the metallothionein superfamily. Type 10 family.

The metallothioneins are involved in the cellular sequestration of toxic metal ions. This chain is Metallothionein-2 (MT-II), found in Candida glabrata (strain ATCC 2001 / BCRC 20586 / JCM 3761 / NBRC 0622 / NRRL Y-65 / CBS 138) (Yeast).